The chain runs to 403 residues: Bifunctional enzyme IspD/IspF (403 aa).

The 2-C-methyl-D-erythritol 4-phosphate cytidylyltransferase stretch occupies residues 1 to 234; the sequence is MPTSKRTAAI…ARLAAMLGDI (234 aa). Residues 235-403 form a 2-C-methyl-D-erythritol 2,4-cyclodiphosphate synthase region; it reads RTGTGYDVHA…SDQEDKGWST (169 aa). Asp-241 and His-243 together coordinate a divalent metal cation. 4-CDP-2-C-methyl-D-erythritol 2-phosphate contacts are provided by residues 241–243 and 267–268; these read DVH and HS. His-275 is a binding site for a divalent metal cation. Residues 289-291, 365-368, Phe-372, and Arg-375 each bind 4-CDP-2-C-methyl-D-erythritol 2-phosphate; these read DIG and TTSE.

The protein in the N-terminal section; belongs to the IspD/TarI cytidylyltransferase family. IspD subfamily. This sequence in the C-terminal section; belongs to the IspF family. A divalent metal cation serves as cofactor.

The enzyme catalyses 2-C-methyl-D-erythritol 4-phosphate + CTP + H(+) = 4-CDP-2-C-methyl-D-erythritol + diphosphate. The catalysed reaction is 4-CDP-2-C-methyl-D-erythritol 2-phosphate = 2-C-methyl-D-erythritol 2,4-cyclic diphosphate + CMP. The protein operates within isoprenoid biosynthesis; isopentenyl diphosphate biosynthesis via DXP pathway; isopentenyl diphosphate from 1-deoxy-D-xylulose 5-phosphate: step 2/6. Its pathway is isoprenoid biosynthesis; isopentenyl diphosphate biosynthesis via DXP pathway; isopentenyl diphosphate from 1-deoxy-D-xylulose 5-phosphate: step 4/6. In terms of biological role, bifunctional enzyme that catalyzes the formation of 4-diphosphocytidyl-2-C-methyl-D-erythritol from CTP and 2-C-methyl-D-erythritol 4-phosphate (MEP) (IspD), and catalyzes the conversion of 4-diphosphocytidyl-2-C-methyl-D-erythritol 2-phosphate (CDP-ME2P) to 2-C-methyl-D-erythritol 2,4-cyclodiphosphate (ME-CPP) with a corresponding release of cytidine 5-monophosphate (CMP) (IspF). This chain is Bifunctional enzyme IspD/IspF, found in Nitrobacter hamburgensis (strain DSM 10229 / NCIMB 13809 / X14).